The sequence spans 728 residues: 1,4-alpha-glucan branching enzyme GlgB (728 aa).

Asp-405 functions as the Nucleophile in the catalytic mechanism. Residue Glu-458 is the Proton donor of the active site.

Belongs to the glycosyl hydrolase 13 family. GlgB subfamily. In terms of assembly, monomer.

The catalysed reaction is Transfers a segment of a (1-&gt;4)-alpha-D-glucan chain to a primary hydroxy group in a similar glucan chain.. It functions in the pathway glycan biosynthesis; glycogen biosynthesis. Functionally, catalyzes the formation of the alpha-1,6-glucosidic linkages in glycogen by scission of a 1,4-alpha-linked oligosaccharide from growing alpha-1,4-glucan chains and the subsequent attachment of the oligosaccharide to the alpha-1,6 position. The chain is 1,4-alpha-glucan branching enzyme GlgB from Shigella flexneri serotype 5b (strain 8401).